Here is a 275-residue protein sequence, read N- to C-terminus: 2,3,4,5-tetrahydropyridine-2,6-dicarboxylate N-succinyltransferase (275 aa).

2 residues coordinate substrate: R108 and D145.

This sequence belongs to the transferase hexapeptide repeat family. Homotrimer.

Its subcellular location is the cytoplasm. The enzyme catalyses (S)-2,3,4,5-tetrahydrodipicolinate + succinyl-CoA + H2O = (S)-2-succinylamino-6-oxoheptanedioate + CoA. Its pathway is amino-acid biosynthesis; L-lysine biosynthesis via DAP pathway; LL-2,6-diaminopimelate from (S)-tetrahydrodipicolinate (succinylase route): step 1/3. The protein is 2,3,4,5-tetrahydropyridine-2,6-dicarboxylate N-succinyltransferase of Roseobacter denitrificans (strain ATCC 33942 / OCh 114) (Erythrobacter sp. (strain OCh 114)).